A 500-amino-acid chain; its full sequence is MSEQQYIMAIDQGTTSSRAIIFDHDGNKVAISQQEFPQYFPQPGWVEHDPLEIWDSVQSVISNVMIKSQIKPYKIAAIGITNQRETTVIWDRHTGKPIYNAIVWQSKQTSDIAEQLIKDGYKDMIHQKTGLVIDSYFAATKIKWILDHVPGAREKAAKGDLMFGTIDTWLLWNLSGRRVHATDVTNASRTMLFNIHTLDWDQDILDLLDIPQSLLPVVKPSSAIYGYTGDYHFYGVQIPIAGIAGDQQAALFGQAAYDKGSIKNTYGTGAFIVMNTGLKPTLSDNGLLTTIAYGLDGQTHYALEGSIFVAGSAVQWLRDGLKMFDKASESEQMAVDAKTTGGVYVVPAFTGLGAPYWDQEVRGAMFGLTRGTERGHIIRATLEAIAYQTKDVVDTMVKDTQLPLTALTVNGGASRNNFMMQFQADILQTPIKRAAMEETTALGAAFLAGLAVDFWEDQDELRKLSRIGDQFDPQMDPQKAADLYRGWQRAIAAAQFYGKD.

T14 lines the ADP pocket. The ATP site is built by T14, T15, and S16. T14 is a sn-glycerol 3-phosphate binding site. An ADP-binding site is contributed by R18. Sn-glycerol 3-phosphate is bound by residues R84, E85, and Y136. Glycerol-binding residues include R84, E85, and Y136. H232 bears the Phosphohistidine; by HPr mark. D246 is a binding site for sn-glycerol 3-phosphate. Residues D246 and Q247 each contribute to the glycerol site. 2 residues coordinate ADP: T268 and G311. 4 residues coordinate ATP: T268, G311, Q315, and G412. Positions 412 and 416 each coordinate ADP.

This sequence belongs to the FGGY kinase family. In terms of assembly, homotetramer and homodimer (in equilibrium). In terms of processing, the phosphoenolpyruvate-dependent sugar phosphotransferase system (PTS), including enzyme I, and histidine-containing protein (HPr) are required for the phosphorylation, which leads to the activation of the enzyme.

It catalyses the reaction glycerol + ATP = sn-glycerol 3-phosphate + ADP + H(+). It participates in polyol metabolism; glycerol degradation via glycerol kinase pathway; sn-glycerol 3-phosphate from glycerol: step 1/1. Its activity is regulated as follows. Activated by phosphorylation and inhibited by fructose 1,6-bisphosphate (FBP). Its function is as follows. Key enzyme in the regulation of glycerol uptake and metabolism. Catalyzes the phosphorylation of glycerol to yield sn-glycerol 3-phosphate. The chain is Glycerol kinase from Limosilactobacillus reuteri (strain DSM 20016) (Lactobacillus reuteri).